Here is a 234-residue protein sequence, read N- to C-terminus: Endo-1,4-beta-xylanase 1 (234 aa).

Positions Met-1–Ala-21 are cleaved as a signal peptide. 2 N-linked (GlcNAc...) asparagine glycosylation sites follow: Asn-25 and Asn-75. The GH11 domain occupies Ser-38–Ala-234. The active-site Nucleophile is the Glu-124. A glycan (N-linked (GlcNAc...) asparagine) is linked at Asn-167. Residue Glu-221 is the Proton donor of the active site.

It belongs to the glycosyl hydrolase 11 (cellulase G) family.

It is found in the secreted. The enzyme catalyses Endohydrolysis of (1-&gt;4)-beta-D-xylosidic linkages in xylans.. The protein operates within glycan degradation; xylan degradation. In terms of biological role, endo-1,4-beta-xylanase involved in the hydrolysis of xylan, a major structural heterogeneous polysaccharide found in plant biomass representing the second most abundant polysaccharide in the biosphere, after cellulose. The chain is Endo-1,4-beta-xylanase 1 (Xyn1) from Leucoagaricus gongylophorus (Leaf-cutting ant fungus).